Reading from the N-terminus, the 461-residue chain is Putative dipeptidase CPSG_01350 (461 aa).

Positions 1 to 10 (MSARDNEKGS) are enriched in basic and acidic residues. The interval 1–31 (MSARDNEKGSARSQPSHAAASEIENVPRPSR) is disordered. Residues 35–52 (WTGTMIKVFIICACAGIV) form a helical membrane-spanning segment. The Zn(2+) site is built by histidine 90, aspartate 92, and glutamate 203. Cysteine 142 and cysteine 232 are disulfide-bonded. Histidine 230 is a substrate binding site. Histidine 274 and histidine 295 together coordinate Zn(2+). Substrate contacts are provided by arginine 306 and aspartate 366. An N-linked (GlcNAc...) asparagine glycan is attached at asparagine 379.

It belongs to the metallo-dependent hydrolases superfamily. Peptidase M19 family. Zn(2+) serves as cofactor.

Its subcellular location is the membrane. The enzyme catalyses an L-aminoacyl-L-amino acid + H2O = 2 an L-alpha-amino acid. Functionally, hydrolyzes a wide range of dipeptides. The protein is Putative dipeptidase CPSG_01350 of Coccidioides posadasii (strain RMSCC 757 / Silveira) (Valley fever fungus).